The chain runs to 180 residues: UPF0227 protein ECA1814 (180 aa).

The protein belongs to the UPF0227 family.

The chain is UPF0227 protein ECA1814 from Pectobacterium atrosepticum (strain SCRI 1043 / ATCC BAA-672) (Erwinia carotovora subsp. atroseptica).